A 98-amino-acid polypeptide reads, in one-letter code: Large ribosomal subunit protein uL23 (98 aa).

The protein belongs to the universal ribosomal protein uL23 family. Part of the 50S ribosomal subunit. Contacts protein L29, and trigger factor when it is bound to the ribosome.

Its function is as follows. One of the early assembly proteins it binds 23S rRNA. One of the proteins that surrounds the polypeptide exit tunnel on the outside of the ribosome. Forms the main docking site for trigger factor binding to the ribosome. The protein is Large ribosomal subunit protein uL23 of Acidothermus cellulolyticus (strain ATCC 43068 / DSM 8971 / 11B).